A 211-amino-acid polypeptide reads, in one-letter code: Protein-L-isoaspartate O-methyltransferase (211 aa).

Ser62 is a catalytic residue.

It belongs to the methyltransferase superfamily. L-isoaspartyl/D-aspartyl protein methyltransferase family.

Its subcellular location is the cytoplasm. The catalysed reaction is [protein]-L-isoaspartate + S-adenosyl-L-methionine = [protein]-L-isoaspartate alpha-methyl ester + S-adenosyl-L-homocysteine. Catalyzes the methyl esterification of L-isoaspartyl residues in peptides and proteins that result from spontaneous decomposition of normal L-aspartyl and L-asparaginyl residues. It plays a role in the repair and/or degradation of damaged proteins. The polypeptide is Protein-L-isoaspartate O-methyltransferase (Shewanella pealeana (strain ATCC 700345 / ANG-SQ1)).